The following is a 294-amino-acid chain: Lipoyl synthase (294 aa).

The [4Fe-4S] cluster site is built by Cys35, Cys40, Cys46, Cys61, Cys65, Cys68, and Ser275. The region spanning Cys46 to Arg264 is the Radical SAM core domain.

This sequence belongs to the radical SAM superfamily. Lipoyl synthase family. [4Fe-4S] cluster serves as cofactor.

Its subcellular location is the cytoplasm. The enzyme catalyses [[Fe-S] cluster scaffold protein carrying a second [4Fe-4S](2+) cluster] + N(6)-octanoyl-L-lysyl-[protein] + 2 oxidized [2Fe-2S]-[ferredoxin] + 2 S-adenosyl-L-methionine + 4 H(+) = [[Fe-S] cluster scaffold protein] + N(6)-[(R)-dihydrolipoyl]-L-lysyl-[protein] + 4 Fe(3+) + 2 hydrogen sulfide + 2 5'-deoxyadenosine + 2 L-methionine + 2 reduced [2Fe-2S]-[ferredoxin]. Its pathway is protein modification; protein lipoylation via endogenous pathway; protein N(6)-(lipoyl)lysine from octanoyl-[acyl-carrier-protein]: step 2/2. In terms of biological role, catalyzes the radical-mediated insertion of two sulfur atoms into the C-6 and C-8 positions of the octanoyl moiety bound to the lipoyl domains of lipoate-dependent enzymes, thereby converting the octanoylated domains into lipoylated derivatives. This chain is Lipoyl synthase, found in Anaeromyxobacter sp. (strain Fw109-5).